The primary structure comprises 184 residues: Adenine phosphoribosyltransferase (184 aa).

It belongs to the purine/pyrimidine phosphoribosyltransferase family. As to quaternary structure, homodimer.

It localises to the cytoplasm. It carries out the reaction AMP + diphosphate = 5-phospho-alpha-D-ribose 1-diphosphate + adenine. The protein operates within purine metabolism; AMP biosynthesis via salvage pathway; AMP from adenine: step 1/1. Catalyzes a salvage reaction resulting in the formation of AMP, that is energically less costly than de novo synthesis. The polypeptide is Adenine phosphoribosyltransferase (Parafrankia sp. (strain EAN1pec)).